The primary structure comprises 431 residues: Serine--tRNA ligase (431 aa).

237 to 239 (TAE) provides a ligand contact to L-serine. 268–270 (RSE) is a binding site for ATP. Residue glutamate 291 coordinates L-serine. 355 to 358 (EISS) contributes to the ATP binding site. Serine 390 contributes to the L-serine binding site.

This sequence belongs to the class-II aminoacyl-tRNA synthetase family. Type-1 seryl-tRNA synthetase subfamily. In terms of assembly, homodimer. The tRNA molecule binds across the dimer.

The protein resides in the cytoplasm. It carries out the reaction tRNA(Ser) + L-serine + ATP = L-seryl-tRNA(Ser) + AMP + diphosphate + H(+). It catalyses the reaction tRNA(Sec) + L-serine + ATP = L-seryl-tRNA(Sec) + AMP + diphosphate + H(+). It functions in the pathway aminoacyl-tRNA biosynthesis; selenocysteinyl-tRNA(Sec) biosynthesis; L-seryl-tRNA(Sec) from L-serine and tRNA(Sec): step 1/1. In terms of biological role, catalyzes the attachment of serine to tRNA(Ser). Is also able to aminoacylate tRNA(Sec) with serine, to form the misacylated tRNA L-seryl-tRNA(Sec), which will be further converted into selenocysteinyl-tRNA(Sec). This Neisseria meningitidis serogroup C (strain 053442) protein is Serine--tRNA ligase.